The primary structure comprises 770 residues: MAGSLDDSIYNNGRSGGGGGGFKFSKGFNKDSISKRIIMMLFFSKGIRAWSCIILLYFLQSSISIISASFYMCLFSAIFSVVVEKPWNLLSSLRPSQIKKIIYHSIFNLLIIITWNSSIKFIGPIGSILASDYTFSTYPLIFNSLLQGNFLATDMSRGSIMLMIGYFLIPLFGISNRLDILGYTSSQVFMIGLFSLIVHNVLVLWKKTIVRSWNSGSSGGKNKLSSLGSCVSTIILFVFKLFEGFSSGSSGSDSINQVSYSQLFVIAIITFILYSLNQFIDDVSEKELTFNVLSKVSLTSSVIFGLLAALFIGFKDFFHPILILSFIFIINAIHILYSKSNDIQPMTFSNNMDGGNSSIKTYNSSGGGGGGSIINGNGSGNAIYYFEILKDVLRQIVDKPTSRRIFTFLVINLMFMFVEMAYGIWTNSLGLITDACHMFFDATALFIALVAEVISQWKQNDKYSYGYGRFQVLSGFVNGIFLIFIAVTILMESVERLLEPPEINTDKLLLVSVLGFIINLIGIFSFHGDHGHSHGGGGGHSHGGGEKKEKHHGHSHGGHGDHQQVTPILGEEKKKKRSVNIDGVFLHLLADTLGSVGVIVSSLIIQIWGYTLADPICSLLISILIFLSVLPLIANTAKTLLQCTPEPIQSSLYQINQFILSIDGVHNIISYHFWSHYDDMNIATLKIQLNETASSNSTLDTERIKKSISKYLNKDHNIHKCIIEFIPLLYNNNNQQQGNDVPLINHHIHNDIHHNHSSSSSSSSHHHRHN.

The Cytoplasmic segment spans residues 1–36 (MAGSLDDSIYNNGRSGGGGGGFKFSKGFNKDSISKR). Residues 37–57 (IIMMLFFSKGIRAWSCIILLY) traverse the membrane as a helical segment. Residues 58–62 (FLQSS) are Extracellular-facing. Residues 63–83 (ISIISASFYMCLFSAIFSVVV) traverse the membrane as a helical segment. Topologically, residues 84–100 (EKPWNLLSSLRPSQIKK) are cytoplasmic. The helical transmembrane segment at 101-117 (IIYHSIFNLLIIITWNS) threads the bilayer. The Extracellular portion of the chain corresponds to 118 to 123 (SIKFIG). Residues 124 to 146 (PIGSILASDYTFSTYPLIFNSLL) form a helical membrane-spanning segment. The Cytoplasmic portion of the chain corresponds to 147–154 (QGNFLATD). The helical transmembrane segment at 155–175 (MSRGSIMLMIGYFLIPLFGIS) threads the bilayer. Topologically, residues 176–184 (NRLDILGYT) are extracellular. The chain crosses the membrane as a helical span at residues 185-205 (SSQVFMIGLFSLIVHNVLVLW). Topologically, residues 206 to 224 (KKTIVRSWNSGSSGGKNKL) are cytoplasmic. Residues 225–245 (SSLGSCVSTIILFVFKLFEGF) form a helical membrane-spanning segment. Over 246–262 (SSGSSGSDSINQVSYSQ) the chain is Extracellular. A helical membrane pass occupies residues 263–283 (LFVIAIITFILYSLNQFIDDV). The Cytoplasmic portion of the chain corresponds to 284-291 (SEKELTFN). A helical transmembrane segment spans residues 292–312 (VLSKVSLTSSVIFGLLAALFI). Residues 313 to 316 (GFKD) are Extracellular-facing. The helical transmembrane segment at 317–337 (FFHPILILSFIFIINAIHILY) threads the bilayer. At 338–404 (SKSNDIQPMT…QIVDKPTSRR (67 aa)) the chain is on the cytoplasmic side. Residues 405–425 (IFTFLVINLMFMFVEMAYGIW) form a helical membrane-spanning segment. Residues 426 to 434 (TNSLGLITD) are Extracellular-facing. The helical transmembrane segment at 435 to 455 (ACHMFFDATALFIALVAEVIS) threads the bilayer. The Cytoplasmic portion of the chain corresponds to 456 to 469 (QWKQNDKYSYGYGR). Residues 470-490 (FQVLSGFVNGIFLIFIAVTIL) traverse the membrane as a helical segment. Residues 491–507 (MESVERLLEPPEINTDK) are Extracellular-facing. The chain crosses the membrane as a helical span at residues 508–528 (LLLVSVLGFIINLIGIFSFHG). The Cytoplasmic portion of the chain corresponds to 529-592 (DHGHSHGGGG…GVFLHLLADT (64 aa)). The interval 532–566 (HSHGGGGGHSHGGGEKKEKHHGHSHGGHGDHQQVT) is disordered. The chain crosses the membrane as a helical span at residues 593–613 (LGSVGVIVSSLIIQIWGYTLA). D614 is a topological domain (extracellular). Residues 615–635 (PICSLLISILIFLSVLPLIAN) form a helical membrane-spanning segment. Topologically, residues 636–770 (TAKTLLQCTP…SSSSHHHRHN (135 aa)) are cytoplasmic. The interval 751–770 (DIHHNHSSSSSSSSHHHRHN) is disordered.

Belongs to the cation diffusion facilitator (CDF) transporter (TC 2.A.4) family. SLC30A subfamily.

The protein resides in the membrane. In terms of biological role, may be involved in zinc transport from the cytoplasm to either intracellular organelles or extracellular spaces. This is Probable zinc transporter protein DDB_G0291141 from Dictyostelium discoideum (Social amoeba).